We begin with the raw amino-acid sequence, 156 residues long: Snaclec A15 (156 aa).

The signal sequence occupies residues 1–23; the sequence is MGRFIFVRFGLLVVFLSLSGTGA. Intrachain disulfides connect C27-C38, C55-C152, and C127-C144. Residues 34-153 form the C-type lectin domain; the sequence is YDQHCYKAFD…CGDDYPFVCK (120 aa). N141 carries N-linked (GlcNAc...) asparagine glycosylation.

The protein belongs to the snaclec family. Heterodimer; disulfide-linked. As to expression, expressed by the venom gland.

It localises to the secreted. Functionally, interferes with one step of hemostasis (modulation of platelet aggregation, or coagulation cascade, for example). This is Snaclec A15 from Macrovipera lebetinus (Levantine viper).